The following is a 1791-amino-acid chain: Brefeldin A-inhibited guanine nucleotide-exchange protein 2 (1791 aa).

Position 1 is an N-acetylmethionine (methionine 1). Residues 2–224 (QESQTKSMFV…KPQSPVIQAT (223 aa)) form a DCB; DCB:DCB domain and DCB:HUS domain interaction region. Disordered stretches follow at residues 208–292 (LEKP…DNGA) and 311–350 (AAEK…IADD). Phosphoserine is present on residues serine 214, serine 218, and serine 227. Positions 214-225 (SKPQSPVIQATA) are enriched in polar residues. Residues 233-243 (LKQSQAQSKPT) show a composition bias toward polar residues. Threonine 244 is modified (phosphothreonine). Residues 244–257 (TPEKTELPNGDHAR) are compositionally biased toward basic and acidic residues. Phosphoserine is present on serine 277. Phosphoserine is present on residues serine 355 and serine 356. An HUS; DCB:HUS domain interaction region spans residues 515–535 (ADAQCVVDIYVNYDCDLNAAN). Serine 621 is modified (phosphoserine). Residue threonine 623 is modified to Phosphothreonine. Residue serine 624 is modified to Phosphoserine. Position 633 is a phosphothreonine (threonine 633). Residues 661–792 (FNKKPKRGIQ…IIMLTTDLHS (132 aa)) enclose the SEC7 domain. Serine 707, serine 1518, serine 1520, serine 1521, serine 1532, serine 1535, serine 1541, and serine 1788 each carry phosphoserine.

As to quaternary structure, homodimer. Interacts with ARFGEF1/BIG1; both proteins are probably part of the same or very similar macromolecular complexes. Interacts with PRKAR1A, PRKAR2A, PRKAR1B, PRKAR2B, PPP1CC, PDE3A, TNFRSF1A, MYCBP and EXOC7. Interacts with GABRB1, GABRB2 and GABRB3. Post-translationally, in vitro phosphorylated by PKA reducing its GEF activity and dephosphorylated by phosphatase PP1. In terms of tissue distribution, expressed in brain (at protein level).

It is found in the cytoplasm. It localises to the membrane. Its subcellular location is the golgi apparatus. The protein localises to the perinuclear region. The protein resides in the trans-Golgi network. It is found in the endosome. It localises to the cytoskeleton. Its subcellular location is the microtubule organizing center. The protein localises to the centrosome. The protein resides in the cell projection. It is found in the dendrite. It localises to the cytoplasmic vesicle. Its subcellular location is the synapse. Inhibited by brefeldin A. Its function is as follows. Promotes guanine-nucleotide exchange on ARF1 and ARF3 and to a lower extent on ARF5 and ARF6. Promotes the activation of ARF1/ARF5/ARF6 through replacement of GDP with GTP. Involved in the regulation of Golgi vesicular transport. Required for the integrity of the endosomal compartment. Involved in trafficking from the trans-Golgi network (TGN) to endosomes and is required for membrane association of the AP-1 complex and GGA1. Seems to be involved in recycling of the transferrin receptor from recycling endosomes to the plasma membrane. Probably is involved in the exit of GABA(A) receptors from the endoplasmic reticulum. Involved in constitutive release of tumor necrosis factor receptor 1 via exosome-like vesicles; the function seems to involve PKA and specifically PRKAR2B. Proposed to act as A kinase-anchoring protein (AKAP) and may mediate crosstalk between Arf and PKA pathways. In Rattus norvegicus (Rat), this protein is Brefeldin A-inhibited guanine nucleotide-exchange protein 2 (Arfgef2).